Reading from the N-terminus, the 424-residue chain is Serine/threonine-protein kinase H1 (424 aa).

Residue Gly2 is the site of N-myristoyl glycine attachment. Cys3 carries the S-palmitoyl cysteine lipid modification. Residues 59–79 (APPCPGVPNTGHTAPPSEPPR) form a disordered region. A Protein kinase domain is found at 98 to 355 (YDIKALIGRG…ALQALRHPWV (258 aa)). ATP contacts are provided by residues 104–112 (IGRGSFSRV) and Lys127. Asp218 functions as the Proton acceptor in the catalytic mechanism. The tract at residues 378–408 (RASSRCQSTKSSQSTRSSRSTRSNKSRRVRE) is disordered. Phosphoserine; by autocatalysis is present on residues Ser380 and Ser381. The span at 381–398 (SRCQSTKSSQSTRSSRST) shows a compositional bias: low complexity.

The protein belongs to the protein kinase superfamily. CAMK Ser/Thr protein kinase family. As to quaternary structure, homodimer. Post-translationally, autophosphorylated on serine residues. In terms of processing, myristoylated. Required for membrane association. Prerequisite for palmitoylation to occur. Palmitoylated.

The protein resides in the golgi apparatus. Its subcellular location is the cytoplasm. It localises to the cytoskeleton. It is found in the microtubule organizing center. The protein localises to the centrosome. The protein resides in the nucleus speckle. Its subcellular location is the endoplasmic reticulum membrane. It localises to the cell membrane. The enzyme catalyses L-seryl-[protein] + ATP = O-phospho-L-seryl-[protein] + ADP + H(+). It catalyses the reaction L-threonyl-[protein] + ATP = O-phospho-L-threonyl-[protein] + ADP + H(+). Activity depends on Ca(2+) concentration. Its function is as follows. Serine/threonine protein kinase that may be involved in the regulation of pre-mRNA processing. It may phosphorylate components of nuclear splice factor compartments (SFC), such as non-snRNP splicing factors containing a serine/arginine-rich domain (SR proteins). Reversible phosphorylation of SR proteins may cause their release into the nucleoplasm and change their local concentration, thereby influencing alternative splicing. The protein is Serine/threonine-protein kinase H1 (Pskh1) of Mus musculus (Mouse).